Reading from the N-terminus, the 167-residue chain is NADH-quinone oxidoreductase subunit B 2 (167 aa).

C38, C39, C103, and C132 together coordinate [4Fe-4S] cluster.

This sequence belongs to the complex I 20 kDa subunit family. NDH-1 is composed of 14 different subunits. Subunits NuoB, C, D, E, F, and G constitute the peripheral sector of the complex. [4Fe-4S] cluster serves as cofactor.

Its subcellular location is the cell inner membrane. It carries out the reaction a quinone + NADH + 5 H(+)(in) = a quinol + NAD(+) + 4 H(+)(out). In terms of biological role, NDH-1 shuttles electrons from NADH, via FMN and iron-sulfur (Fe-S) centers, to quinones in the respiratory chain. The immediate electron acceptor for the enzyme in this species is believed to be ubiquinone. Couples the redox reaction to proton translocation (for every two electrons transferred, four hydrogen ions are translocated across the cytoplasmic membrane), and thus conserves the redox energy in a proton gradient. In Rhizobium meliloti (strain 1021) (Ensifer meliloti), this protein is NADH-quinone oxidoreductase subunit B 2.